The following is a 342-amino-acid chain: L-threonine 3-dehydrogenase (342 aa).

C38 is a binding site for Zn(2+). Catalysis depends on charge relay system residues T40 and H43. The Zn(2+) site is built by H63, E64, C93, C96, C99, and C107. Residues I175, D195, R200, 262–264 (LGI), and 286–287 (IY) contribute to the NAD(+) site.

This sequence belongs to the zinc-containing alcohol dehydrogenase family. In terms of assembly, homotetramer. Zn(2+) is required as a cofactor.

It is found in the cytoplasm. It catalyses the reaction L-threonine + NAD(+) = (2S)-2-amino-3-oxobutanoate + NADH + H(+). Its pathway is amino-acid degradation; L-threonine degradation via oxydo-reductase pathway; glycine from L-threonine: step 1/2. Catalyzes the NAD(+)-dependent oxidation of L-threonine to 2-amino-3-ketobutyrate. This is L-threonine 3-dehydrogenase from Burkholderia vietnamiensis (strain G4 / LMG 22486) (Burkholderia cepacia (strain R1808)).